The primary structure comprises 178 residues: Peptidyl-prolyl cis-trans isomerase (178 aa).

Residues 1-17 (MKLLFFFLVLAVSAAVA) form the signal peptide. Residues 26-177 (FMDIEIDGES…KIAKITDIGL (152 aa)) form the PPIase cyclophilin-type domain.

It belongs to the cyclophilin-type PPIase family. PPIase A subfamily.

It catalyses the reaction [protein]-peptidylproline (omega=180) = [protein]-peptidylproline (omega=0). In terms of biological role, PPIases accelerate the folding of proteins. It catalyzes the cis-trans isomerization of proline imidic peptide bonds in oligopeptides. Up-regulates interferon gamma production by bovine T-cells. Stimulates high levels of IFN-gamma production by peripheral blood mononuclear cells and T-cells. The IFN-gamma-inducing effect is blocked by cyclosporin A (CsA). This is Peptidyl-prolyl cis-trans isomerase from Neospora caninum (Coccidian parasite).